The primary structure comprises 696 residues: Spermatogenesis-associated protein 21 (696 aa).

Disordered regions lie at residues 1-301 and 329-386; these read MDNR…AAGT and LKAR…SVPT. Basic and acidic residues predominate over residues 67-86; it reads KGPRYRDTFKEGPSELRTQE. Positions 96-116 are enriched in polar residues; the sequence is KQSSWVPQEGSQELQAGQDQS. The span at 195–209 shows a compositional bias: basic and acidic residues; that stretch reads GDKRPKEADVPHIRP. Polar residues predominate over residues 223-235; sequence DSSQEAMPPTSTV. Residues 275 to 287 are compositionally biased toward basic and acidic residues; the sequence is EVRDIGERREPDR. Low complexity-rich tracts occupy residues 288 to 297 and 339 to 366; these read VQQQPQKPVV and SPRT…SGPS. Residues 424–451 are a coiled coil; sequence EPEEQSLQKLYQNREKSEEQLTLKQEEA. The region spanning 481-516 is the EF-hand domain; sequence VTPAQVEDALMSADVNGDGHVDFKDFLAVMTDTRRF. Ca(2+)-binding residues include aspartate 494, asparagine 496, aspartate 498, histidine 500, and aspartate 505. Residues 646–696 form a disordered region; it reads KPTNHYVQDQCTTPGLAPDIRSPFFQSRSQGNREHNSDSRKWPSSVPSRTH. The span at 676–686 shows a compositional bias: basic and acidic residues; sequence GNREHNSDSRK.

Its function is as follows. Involved in the differentiation of haploid spermatids. In Macaca fascicularis (Crab-eating macaque), this protein is Spermatogenesis-associated protein 21 (SPATA21).